Reading from the N-terminus, the 511-residue chain is 2-isopropylmalate synthase (511 aa).

A Pyruvate carboxyltransferase domain is found at 5-267; that stretch reads LIIFDTTLRD…DTDINATHIL (263 aa). Positions 14, 202, 204, and 238 each coordinate Mn(2+). A regulatory domain region spans residues 392–511; sequence KLVSLKVCTE…ATNKAQHPQI (120 aa).

It belongs to the alpha-IPM synthase/homocitrate synthase family. LeuA type 1 subfamily. As to quaternary structure, homodimer. It depends on Mn(2+) as a cofactor.

It localises to the cytoplasm. It carries out the reaction 3-methyl-2-oxobutanoate + acetyl-CoA + H2O = (2S)-2-isopropylmalate + CoA + H(+). It participates in amino-acid biosynthesis; L-leucine biosynthesis; L-leucine from 3-methyl-2-oxobutanoate: step 1/4. In terms of biological role, catalyzes the condensation of the acetyl group of acetyl-CoA with 3-methyl-2-oxobutanoate (2-ketoisovalerate) to form 3-carboxy-3-hydroxy-4-methylpentanoate (2-isopropylmalate). The sequence is that of 2-isopropylmalate synthase from Ruthia magnifica subsp. Calyptogena magnifica.